The primary structure comprises 450 residues: uncharacterized protein (450 aa).

Residues 387 to 416 (ELDEKNNNKEENKNQDLHEPKESSSEDLLK) are compositionally biased toward basic and acidic residues. Residues 387–439 (ELDEKNNNKEENKNQDLHEPKESSSEDLLKRLNNLKINTNEGPVQDNENHDNE) form a disordered region.

This is an uncharacterized protein from Saccharomyces cerevisiae (strain ATCC 204508 / S288c) (Baker's yeast).